Here is a 178-residue protein sequence, read N- to C-terminus: MKAYFYDNLPGDQRLPHDSGKEVTVAELEKVGVLYFRFPDVEGVNTLAAERGYKNRDEIIVSPEKMGAIYETKVRQFFDEHLHEDEEIRYIRDGAGYFDVRNEGDEWIRIKLVKDDLIILPAGIYHRFTTDDTNYIQAMRLFKEEPKWTPLNRTEGLDENPYRQEYVTQFLKAQAEQA.

Histidine 81, histidine 83, glutamate 87, and histidine 126 together coordinate Fe(2+). Histidine 81, histidine 83, glutamate 87, and histidine 126 together coordinate Ni(2+).

Belongs to the acireductone dioxygenase (ARD) family. Fe(2+) is required as a cofactor. The cofactor is Ni(2+).

The protein localises to the cytoplasm. It localises to the nucleus. It carries out the reaction 1,2-dihydroxy-5-(methylsulfanyl)pent-1-en-3-one + O2 = 4-methylsulfanyl-2-oxobutanoate + formate + 2 H(+). It catalyses the reaction 1,2-dihydroxy-5-(methylsulfanyl)pent-1-en-3-one + O2 = 3-(methylsulfanyl)propanoate + CO + formate + 2 H(+). It functions in the pathway amino-acid biosynthesis; L-methionine biosynthesis via salvage pathway; L-methionine from S-methyl-5-thio-alpha-D-ribose 1-phosphate: step 5/6. Functionally, catalyzes 2 different reactions between oxygen and the acireductone 1,2-dihydroxy-3-keto-5-methylthiopentene (DHK-MTPene) depending upon the metal bound in the active site. Fe-containing acireductone dioxygenase (Fe-ARD) produces formate and 2-keto-4-methylthiobutyrate (KMTB), the alpha-ketoacid precursor of methionine in the methionine recycle pathway. Ni-containing acireductone dioxygenase (Ni-ARD) produces methylthiopropionate, carbon monoxide and formate, and does not lie on the methionine recycle pathway. The polypeptide is Acireductone dioxygenase (adi1) (Neurospora crassa (strain ATCC 24698 / 74-OR23-1A / CBS 708.71 / DSM 1257 / FGSC 987)).